Consider the following 718-residue polypeptide: Polyribonucleotide nucleotidyltransferase (718 aa).

Mg(2+) is bound by residues D497 and D503. The KH domain maps to 564–623; sequence PRLLTMRIDPDMIGLVIGPGGKTVKSITEQTKTKIDIDDDGTVTISASEAEQAERAKQLI. The S1 motif domain occupies 633–701; that stretch reads GEVYVGRVTR…NKGRLNLTRL (69 aa).

Belongs to the polyribonucleotide nucleotidyltransferase family. Mg(2+) is required as a cofactor.

The protein resides in the cytoplasm. The catalysed reaction is RNA(n+1) + phosphate = RNA(n) + a ribonucleoside 5'-diphosphate. In terms of biological role, involved in mRNA degradation. Catalyzes the phosphorolysis of single-stranded polyribonucleotides processively in the 3'- to 5'-direction. This chain is Polyribonucleotide nucleotidyltransferase, found in Gloeothece citriformis (strain PCC 7424) (Cyanothece sp. (strain PCC 7424)).